Consider the following 292-residue polypeptide: Ribosomal protein L11 methyltransferase (292 aa).

The S-adenosyl-L-methionine site is built by T143, G164, D186, and N228.

Belongs to the methyltransferase superfamily. PrmA family.

It is found in the cytoplasm. It catalyses the reaction L-lysyl-[protein] + 3 S-adenosyl-L-methionine = N(6),N(6),N(6)-trimethyl-L-lysyl-[protein] + 3 S-adenosyl-L-homocysteine + 3 H(+). Methylates ribosomal protein L11. This chain is Ribosomal protein L11 methyltransferase, found in Aeromonas salmonicida (strain A449).